The primary structure comprises 628 residues: Phosphomethylpyrimidine synthase (628 aa).

Residues Asn-225, Met-254, Tyr-283, His-319, 339-341, 380-383, and Glu-419 contribute to the substrate site; these read SRG and DGLR. His-423 is a binding site for Zn(2+). Residue Tyr-446 participates in substrate binding. His-487 provides a ligand contact to Zn(2+). Positions 567, 570, and 575 each coordinate [4Fe-4S] cluster.

Belongs to the ThiC family. Homodimer. [4Fe-4S] cluster serves as cofactor.

The enzyme catalyses 5-amino-1-(5-phospho-beta-D-ribosyl)imidazole + S-adenosyl-L-methionine = 4-amino-2-methyl-5-(phosphooxymethyl)pyrimidine + CO + 5'-deoxyadenosine + formate + L-methionine + 3 H(+). It participates in cofactor biosynthesis; thiamine diphosphate biosynthesis. Functionally, catalyzes the synthesis of the hydroxymethylpyrimidine phosphate (HMP-P) moiety of thiamine from aminoimidazole ribotide (AIR) in a radical S-adenosyl-L-methionine (SAM)-dependent reaction. The protein is Phosphomethylpyrimidine synthase of Leptothrix cholodnii (strain ATCC 51168 / LMG 8142 / SP-6) (Leptothrix discophora (strain SP-6)).